The following is a 547-amino-acid chain: Glutamyl-tRNA(Gln) amidotransferase subunit B, mitochondrial (547 aa).

The protein belongs to the GatB/GatE family. GatB subfamily. Subunit of the heterotrimeric GatFAB amidotransferase (AdT) complex, composed of A, B and F subunits.

It localises to the mitochondrion. It carries out the reaction L-glutamyl-tRNA(Gln) + L-glutamine + ATP + H2O = L-glutaminyl-tRNA(Gln) + L-glutamate + ADP + phosphate + H(+). In terms of biological role, allows the formation of correctly charged Gln-tRNA(Gln) through the transamidation of misacylated Glu-tRNA(Gln) in the mitochondria. The reaction takes place in the presence of glutamine and ATP through an activated gamma-phospho-Glu-tRNA(Gln). In Lachancea thermotolerans (strain ATCC 56472 / CBS 6340 / NRRL Y-8284) (Yeast), this protein is Glutamyl-tRNA(Gln) amidotransferase subunit B, mitochondrial.